The chain runs to 219 residues: Ion-translocating oxidoreductase complex subunit G (219 aa).

The chain crosses the membrane as a helical span at residues 25 to 45 (GLLLGLFSLVSALMLALASDA). Thr187 is modified (FMN phosphoryl threonine).

This sequence belongs to the RnfG family. In terms of assembly, the complex is composed of six subunits: RnfA, RnfB, RnfC, RnfD, RnfE and RnfG. It depends on FMN as a cofactor.

It is found in the cellular chromatophore membrane. Functionally, part of a membrane-bound complex that couples electron transfer with translocation of ions across the membrane. This Cereibacter sphaeroides (strain ATCC 17029 / ATH 2.4.9) (Rhodobacter sphaeroides) protein is Ion-translocating oxidoreductase complex subunit G.